Reading from the N-terminus, the 510-residue chain is Sulfoquinovosyl transferase SQD2 (510 aa).

A chloroplast-targeting transit peptide spans 1 to 83; it reads MTTLSSINLS…SNDMTITQVR (83 aa). Position 88 is a phosphoserine (Ser88). Residues 198–218 form a helical membrane-spanning segment; the sequence is PGVMVFGALAIAKMLSVPIVM.

Belongs to the glycosyltransferase group 1 family. Glycosyltransferase 4 subfamily.

The protein localises to the plastid. It localises to the chloroplast membrane. It catalyses the reaction UDP-alpha-D-6-sulfoquinovose + a 1,2-diacyl-sn-glycerol = a 6-sulfo-alpha-D-quinovosyldiacylglycerol + UDP + H(+). It participates in glycolipid biosynthesis. Functionally, catalyzes the transfer of the sulfoquinovose moiety from UDP-sulfoquinovose to diacylglycerol during sulfolipid biosynthesis. Sulfolipid contributes to maintaining a negatively charged lipid-water interface, a requirement for proper function of photosynthetic membranes. Sulfolipid may also function as a substitute of anionic phospholipids under phosphate-limited growth conditions. The sequence is that of Sulfoquinovosyl transferase SQD2 from Arabidopsis thaliana (Mouse-ear cress).